A 235-amino-acid chain; its full sequence is Octanoyltransferase (235 aa).

The region spanning 52-229 (KNRQASMIFC…SICSALEYIN (178 aa)) is the BPL/LPL catalytic domain. Substrate-binding positions include 89–96 (RGGKITWH), 159–161 (AIG), and 172–174 (GFA). Cysteine 190 acts as the Acyl-thioester intermediate in catalysis.

Belongs to the LipB family.

The protein localises to the cytoplasm. It catalyses the reaction octanoyl-[ACP] + L-lysyl-[protein] = N(6)-octanoyl-L-lysyl-[protein] + holo-[ACP] + H(+). Its pathway is protein modification; protein lipoylation via endogenous pathway; protein N(6)-(lipoyl)lysine from octanoyl-[acyl-carrier-protein]: step 1/2. Functionally, catalyzes the transfer of endogenously produced octanoic acid from octanoyl-acyl-carrier-protein onto the lipoyl domains of lipoate-dependent enzymes. Lipoyl-ACP can also act as a substrate although octanoyl-ACP is likely to be the physiological substrate. The sequence is that of Octanoyltransferase from Tropheryma whipplei (strain Twist) (Whipple's bacillus).